Here is a 435-residue protein sequence, read N- to C-terminus: Membrane-bound ghrelin O-acyltransferase MBOAT4 (435 aa).

The Lumenal portion of the chain corresponds to 1 to 5; the sequence is MDWLQ. Residues 6-26 form a helical membrane-spanning segment; it reads LFFLHPLSFYQGAAFPFALLF. Residues 27–40 lie on the Cytoplasmic side of the membrane; it reads NYLCILDTFSTRAR. The chain crosses the membrane as a helical span at residues 41 to 56; it reads YLFLLAGGGVLAFAAM. The Lumenal portion of the chain corresponds to 57 to 59; it reads GPY. The chain crosses the membrane as a helical span at residues 60-76; the sequence is SLLIFIPALCAVALVSF. Topologically, residues 77–82 are cytoplasmic; sequence LSPQEV. The chain crosses the membrane as a helical span at residues 83 to 101; sequence HRLTFFFQMGWQTLCHLGL. Residues 102–120 are Lumenal-facing; it reads HYTEYYLGEPPPVRFYITL. The chain crosses the membrane as a helical span at residues 121-136; sequence SSLMLLTQRVTSLSLD. Residues 137 to 206 are Cytoplasmic-facing; it reads ICEGKVEAPR…YPSISFRALT (70 aa). Residues 207–227 traverse the membrane as a helical segment; that stretch reads WRGLQILGLECLKVALRSAVS. The Lumenal segment spans residues 228 to 240; sequence AGAGLDDCQRLEC. The helical transmembrane segment at 241-261 threads the bilayer; the sequence is IYLMWSTAWLFKLTYYSHWIL. Over 262–324 the chain is Cytoplasmic; the sequence is DDSLLHAAGF…RRLVFRKSRR (63 aa). Residues N307 and H338 contribute to the active site. The chain crosses the membrane as a helical span at residues 325 to 338; that stretch reads WPLLQTFAFSAWWH. Residues 339–340 lie on the Lumenal side of the membrane; it reads GL. The chain crosses the membrane as a helical span at residues 341 to 357; it reads HPGQVFGFLCWSVMVKA. Topologically, residues 358-376 are cytoplasmic; it reads DYLIHTFANVCIRSWPLRL. Residues 377–397 form a helical membrane-spanning segment; sequence LYRALTWAHTQLIIAYIMLAV. Residues 398-407 are Lumenal-facing; the sequence is EGRSLSSLCQ. Residues 408 to 428 traverse the membrane as a helical segment; sequence LCCSYNSLFPVMYGLLLFLLA. The Cytoplasmic segment spans residues 429–435; that stretch reads ERKDKRN.

It belongs to the membrane-bound acyltransferase family. In terms of assembly, monomer. In terms of processing, not glycosylated. In terms of tissue distribution, highly expressed in stomach and pancreas. Lower expression in small intestine and colon. Very low expression in testis.

The protein resides in the endoplasmic reticulum membrane. The catalysed reaction is octanoyl-CoA + L-seryl-[protein] = O-octanoyl-L-seryl-[protein] + CoA. It carries out the reaction hexanoyl-CoA + L-seryl-[protein] = O-hexanoyl-L-seryl-[protein] + CoA. It catalyses the reaction decanoyl-CoA + L-seryl-[protein] = O-decanoyl-L-seryl-[protein] + CoA. The enzyme catalyses L-seryl-[protein] + acetyl-CoA = O-acetyl-L-seryl-[protein] + CoA. The catalysed reaction is L-seryl-[protein] + butanoyl-CoA = O-butanoyl-L-seryl-[protein] + CoA. It carries out the reaction pentanoyl-CoA + L-seryl-[protein] = O-pentanoyl-L-seryl-[protein] + CoA. It catalyses the reaction heptanoyl-CoA + L-seryl-[protein] = O-heptanoyl-L-seryl-[protein] + CoA. The enzyme catalyses nonanoyl-CoA + L-seryl-[protein] = O-nonanoyl-L-seryl-[protein] + CoA. The catalysed reaction is L-seryl-[protein] + dodecanoyl-CoA = O-dodecanoyl-L-seryl-[protein] + CoA. It carries out the reaction L-seryl-[protein] + tetradecanoyl-CoA = O-tetradecanoyl-L-seryl-[protein] + CoA. It catalyses the reaction a fatty acyl-CoA + L-seryl-[protein] = O-fatty acyl-L-seryl-[protein] + CoA. With respect to regulation, inhibited by 1-[2-cyano-3,12-dioxooleana-1,9(11)- dien-28-oyl]ethylamide (CDDO-EA) with an IC(50) of 60 uM. Inhibited by Fe3+ and Cu2+ and the O-acyltransferase activity is completely blocked over 5 mM Fe3+ and 0.5 mM Cu2+. In terms of biological role, catalyzes ghrelin acylation at 'Ser-3' using preferentially octanoyl-CoA, hexanoyl-CoA and decanoyl-CoA as acyl-CoA donors leading to ghrelin activity. In vitro also uses acyl-CoA donors of different lengths from short-chain (C2) to long-chain fatty acids (C16) knowing that acyl-CoA donors from butanoyl-CoA (C4) to dodecanoyl-CoA (C12) are more efficient compared to longer acyl-CoA donors, such as myristoyl-CoA (C14) and palmitoyl-CoA (C16) that are not efficient. Its function is as follows. Inactive octanoyltransferase activity. The polypeptide is Membrane-bound ghrelin O-acyltransferase MBOAT4 (Mus musculus (Mouse)).